A 239-amino-acid chain; its full sequence is Orotidine 5'-phosphate decarboxylase (239 aa).

Substrate is bound by residues Asp-10, Lys-32, 59–68 (DLKLHDIPNT), Thr-122, Arg-184, Gln-193, Gly-213, and Arg-214. Lys-61 functions as the Proton donor in the catalytic mechanism.

Belongs to the OMP decarboxylase family. Type 1 subfamily. In terms of assembly, homodimer.

The enzyme catalyses orotidine 5'-phosphate + H(+) = UMP + CO2. It participates in pyrimidine metabolism; UMP biosynthesis via de novo pathway; UMP from orotate: step 2/2. Its function is as follows. Catalyzes the decarboxylation of orotidine 5'-monophosphate (OMP) to uridine 5'-monophosphate (UMP). This Shouchella clausii (strain KSM-K16) (Alkalihalobacillus clausii) protein is Orotidine 5'-phosphate decarboxylase.